A 644-amino-acid polypeptide reads, in one-letter code: Subversion of eukaryotic traffic protein A (644 aa).

A glucosyltransferase region spans residues 1 to 400 (MYKIYSYLGW…FHTLLSQVSD (400 aa)). Residues 401-644 (PVNPTAHELK…EYDNNHGLRI (244 aa)) form a ptdIns(3)P-binding and localization domain region.

Ubiquitinated and polyubiquitinated when ectopically produced in both yeast and mammalian cells; however it is unsure if this modification occurs during the L.pneumophila infection of host cells.

It localises to the secreted. In terms of biological role, secreted effector that interferes with vesicular trafficking of host cells. Possesses glucohydrolase and mono-O-glucosyltransferase activity by using UDP-glucose as a sugar donor substrate. Is able to glucosylate histones H4 and H3.1 in vitro, but it is unlikely that histones are the natural substrates for SetA. May glycosylate a component of the host cell vesicle trafficking machinery during L.pneumophila infection. Binds with high specificity to phosphatidylinositol 3-phosphate (PtdIns(3)P), (with a dissociation constant value of 809 nM), which guides SetA to the cytosolic leaflet of the early phagosome of the host cell. The chain is Subversion of eukaryotic traffic protein A (setA) from Legionella pneumophila subsp. pneumophila (strain Philadelphia 1 / ATCC 33152 / DSM 7513).